Reading from the N-terminus, the 539-residue chain is uncharacterized protein (539 aa).

The interval alanine 34–aspartate 63 is disordered. 11 helical membrane-spanning segments follow: residues phenylalanine 103–phenylalanine 123, methionine 141–valine 161, isoleucine 184–leucine 204, glycine 244–asparagine 264, phenylalanine 277–isoleucine 299, leucine 325–phenylalanine 345, valine 360–alanine 380, threonine 399–leucine 419, valine 434–threonine 454, isoleucine 470–leucine 490, and tryptophan 496–glutamate 516.

The protein belongs to the multi antimicrobial extrusion (MATE) (TC 2.A.66.1) family.

It localises to the vacuole membrane. This is an uncharacterized protein from Schizosaccharomyces pombe (strain 972 / ATCC 24843) (Fission yeast).